The chain runs to 293 residues: Bifunctional protein FolD (293 aa).

Residues 169–171 (GRG), T196, and V237 contribute to the NADP(+) site.

The protein belongs to the tetrahydrofolate dehydrogenase/cyclohydrolase family. Homodimer.

It carries out the reaction (6R)-5,10-methylene-5,6,7,8-tetrahydrofolate + NADP(+) = (6R)-5,10-methenyltetrahydrofolate + NADPH. The enzyme catalyses (6R)-5,10-methenyltetrahydrofolate + H2O = (6R)-10-formyltetrahydrofolate + H(+). Its pathway is one-carbon metabolism; tetrahydrofolate interconversion. Functionally, catalyzes the oxidation of 5,10-methylenetetrahydrofolate to 5,10-methenyltetrahydrofolate and then the hydrolysis of 5,10-methenyltetrahydrofolate to 10-formyltetrahydrofolate. This is Bifunctional protein FolD from Leifsonia xyli subsp. xyli (strain CTCB07).